The primary structure comprises 182 residues: T-cell surface glycoprotein CD3 gamma chain (182 aa).

A signal peptide spans Met-1 to Ala-22. At Gln-23 to Ser-116 the chain is on the extracellular side. Residues Gln-37–Ser-94 form the Ig-like domain. A disulfide bridge connects residues Cys-46 and Cys-87. Asn-66 carries N-linked (GlcNAc...) asparagine glycosylation. A helical membrane pass occupies residues Gly-117 to Ala-137. Over Gly-138 to Lys-182 the chain is Cytoplasmic. Ser-145 is subject to Phosphoserine. Ser-148 bears the Phosphoserine; by PKC mark. In terms of domain architecture, ITAM spans Asp-149 to Asn-177. Residues Leu-153 to Leu-154 carry the Di-leucine motif motif.

As to quaternary structure, the TCR-CD3 complex is composed of a CD3D/CD3E and a CD3G/CD3E heterodimers that preferentially associate with TCRalpha and TCRbeta, respectively, to form TCRalpha/CD3E/CD3G and TCRbeta/CD3G/CD3E trimers. In turn, the hexamer interacts with CD3Z homodimer to form the TCR-CD3 complex. Alternatively, TCRalpha and TCRbeta can be replaced by TCRgamma and TCRdelta. Post-translationally, phosphorylated on Tyr residues after T-cell receptor triggering by LCK in association with CD4/CD8. Phosphorylated also by PKC; leading to the TCR complex down-regulation. In terms of processing, phosphorylated on Tyr residues after T-cell receptor triggering by LCK in association with CD4/CD8.

It localises to the cell membrane. In terms of biological role, part of the TCR-CD3 complex present on T-lymphocyte cell surface that plays an essential role in adaptive immune response. When antigen presenting cells (APCs) activate T-cell receptor (TCR), TCR-mediated signals are transmitted across the cell membrane by the CD3 chains CD3D, CD3E, CD3G and CD3Z. All CD3 chains contain immunoreceptor tyrosine-based activation motifs (ITAMs) in their cytoplasmic domain. Upon TCR engagement, these motifs become phosphorylated by Src family protein tyrosine kinases LCK and FYN, resulting in the activation of downstream signaling pathways. In addition to this role of signal transduction in T-cell activation, CD3G plays an essential role in the dynamic regulation of TCR expression at the cell surface. Indeed, constitutive TCR cycling is dependent on the di-leucine-based (diL) receptor-sorting motif present in CD3G. This chain is T-cell surface glycoprotein CD3 gamma chain (Cd3g), found in Rattus norvegicus (Rat).